Here is a 206-residue protein sequence, read N- to C-terminus: Adenylate kinase (206 aa).

10–15 is an ATP binding site; it reads GAGKGT. The segment at 30–59 is NMP; that stretch reads STGDMLRAAVAAGTPVGLKAKDIMASGGLV. AMP contacts are provided by residues T31, R36, 57-59, 85-88, and Q92; these read GLV and GFPR. An LID region spans residues 126-142; sequence NRVAETTARGEQVRADD. ATP is bound at residue R127. AMP contacts are provided by R139 and R150. M178 is a binding site for ATP.

The protein belongs to the adenylate kinase family. In terms of assembly, monomer.

It localises to the cytoplasm. The catalysed reaction is AMP + ATP = 2 ADP. Its pathway is purine metabolism; AMP biosynthesis via salvage pathway; AMP from ADP: step 1/1. In terms of biological role, catalyzes the reversible transfer of the terminal phosphate group between ATP and AMP. Plays an important role in cellular energy homeostasis and in adenine nucleotide metabolism. The chain is Adenylate kinase from Nitrobacter winogradskyi (strain ATCC 25391 / DSM 10237 / CIP 104748 / NCIMB 11846 / Nb-255).